We begin with the raw amino-acid sequence, 171 residues long: Shikimate kinase (171 aa).

14 to 19 (GAGKST) provides a ligand contact to ATP. Ser-18 provides a ligand contact to Mg(2+). Residues Asp-36, Arg-60, and Gly-82 each contribute to the substrate site. Arg-120 provides a ligand contact to ATP. Arg-139 contributes to the substrate binding site. ATP is bound at residue Gln-156.

It belongs to the shikimate kinase family. In terms of assembly, monomer. The cofactor is Mg(2+).

It localises to the cytoplasm. The catalysed reaction is shikimate + ATP = 3-phosphoshikimate + ADP + H(+). It functions in the pathway metabolic intermediate biosynthesis; chorismate biosynthesis; chorismate from D-erythrose 4-phosphate and phosphoenolpyruvate: step 5/7. Its function is as follows. Catalyzes the specific phosphorylation of the 3-hydroxyl group of shikimic acid using ATP as a cosubstrate. This is Shikimate kinase from Shewanella sediminis (strain HAW-EB3).